The primary structure comprises 204 residues: Large ribosomal subunit protein uL4 (204 aa).

Positions 49–90 are disordered; that stretch reads KVKGMGEVSGTTKKPYRQKGTGSARQGSLRAPQYRTGGAVHG.

Belongs to the universal ribosomal protein uL4 family. As to quaternary structure, part of the 50S ribosomal subunit.

In terms of biological role, one of the primary rRNA binding proteins, this protein initially binds near the 5'-end of the 23S rRNA. It is important during the early stages of 50S assembly. It makes multiple contacts with different domains of the 23S rRNA in the assembled 50S subunit and ribosome. Its function is as follows. Forms part of the polypeptide exit tunnel. The protein is Large ribosomal subunit protein uL4 of Gluconacetobacter diazotrophicus (strain ATCC 49037 / DSM 5601 / CCUG 37298 / CIP 103539 / LMG 7603 / PAl5).